A 20-amino-acid chain; its full sequence is Fibrinogen beta chain (20 aa).

Residues Ile-1–Arg-12 show a composition bias toward acidic residues. Residues Ile-1–Arg-20 form a disordered region.

As to quaternary structure, heterohexamer; disulfide linked. Contains 2 sets of 3 non-identical chains (alpha, beta and gamma). The 2 heterotrimers are in head to head conformation with the N-termini in a small central domain. Post-translationally, conversion of fibrinogen to fibrin is triggered by thrombin, which cleaves fibrinopeptides A and B from alpha and beta chains, and thus exposes the N-terminal polymerization sites responsible for the formation of the soft clot.

Its subcellular location is the secreted. Its function is as follows. Cleaved by the protease thrombin to yield monomers which, together with fibrinogen alpha (FGA) and fibrinogen gamma (FGG), polymerize to form an insoluble fibrin matrix. Fibrin has a major function in hemostasis as one of the primary components of blood clots. In addition, functions during the early stages of wound repair to stabilize the lesion and guide cell migration during re-epithelialization. Was originally thought to be essential for platelet aggregation, based on in vitro studies using anticoagulated blood. However subsequent studies have shown that it is not absolutely required for thrombus formation in vivo. Enhances expression of SELP in activated platelets. Maternal fibrinogen is essential for successful pregnancy. Fibrin deposition is also associated with infection, where it protects against IFNG-mediated hemorrhage. May also facilitate the antibacterial immune response via both innate and T-cell mediated pathways. In Felis catus (Cat), this protein is Fibrinogen beta chain (FGB).